Here is a 359-residue protein sequence, read N- to C-terminus: Serine hydrolase-like protein DDB_G0286239 (359 aa).

The 252-residue stretch at L38–E289 folds into the AB hydrolase-1 domain. S111 is a catalytic residue. The disordered stretch occupies residues F310–L359. The segment covering H334–I351 has biased composition (polar residues).

It belongs to the AB hydrolase superfamily.

Probable serine hydrolase. In Dictyostelium discoideum (Social amoeba), this protein is Serine hydrolase-like protein DDB_G0286239.